The primary structure comprises 141 residues: Nucleoside diphosphate kinase (141 aa).

Residues K11, F59, R87, T93, R104, and N114 each contribute to the ATP site. H117 (pros-phosphohistidine intermediate) is an active-site residue.

The protein belongs to the NDK family. In terms of assembly, homotetramer. Mg(2+) is required as a cofactor.

Its subcellular location is the cytoplasm. It carries out the reaction a 2'-deoxyribonucleoside 5'-diphosphate + ATP = a 2'-deoxyribonucleoside 5'-triphosphate + ADP. It catalyses the reaction a ribonucleoside 5'-diphosphate + ATP = a ribonucleoside 5'-triphosphate + ADP. Functionally, major role in the synthesis of nucleoside triphosphates other than ATP. The ATP gamma phosphate is transferred to the NDP beta phosphate via a ping-pong mechanism, using a phosphorylated active-site intermediate. The polypeptide is Nucleoside diphosphate kinase (Cupriavidus metallidurans (strain ATCC 43123 / DSM 2839 / NBRC 102507 / CH34) (Ralstonia metallidurans)).